A 493-amino-acid chain; its full sequence is tRNA-dihydrouridine(20) synthase [NAD(P)+]-like (493 aa).

The segment at 1–333 (MILNSLSLCY…TQELDAQQAR (333 aa)) is catalytic domain. Residues 18 to 20 (PMV), glutamate 43, and glutamine 87 each bind FMN. Catalysis depends on cysteine 116, which acts as the Proton donor. FMN-binding positions include lysine 155, histidine 183, 214-216 (NGG), and 242-243 (AR). The segment covering 330–342 (QQARLSAKTSEQT) has biased composition (polar residues). The segment at 330–349 (QQARLSAKTSEQTGEPAEDT) is disordered. Interaction with tRNA stretches follow at residues 367 to 371 (QITPK) and 420 to 424 (KLAEQ). Residues 369-436 (TPKMCLLEWC…AIVCLRSQGL (68 aa)) enclose the DRBM domain. Positions 438–493 (EGRLGEESPSLHKRKREAPDQDPGGPRAQELAQPGDLCKKPFVALGSGEESPLEGW) are disordered. Phosphoserine occurs at positions 445 and 488.

The protein belongs to the Dus family. Dus2 subfamily. As to quaternary structure, interacts with EPRS1. Interacts (via DRBM domain) with PRKRA and EIF2AK2/PKR (via DRBM 1 domain). Requires FMN as cofactor. In terms of tissue distribution, weak expression in heart, placenta and skeletal muscle. Up-regulated in most lung cancer cells (at protein level).

The protein localises to the cytoplasm. The protein resides in the endoplasmic reticulum. It catalyses the reaction 5,6-dihydrouridine(20) in tRNA + NADP(+) = uridine(20) in tRNA + NADPH + H(+). Inhibited by canertinib, PD 168393, AST-1306 and PF-6274484. In terms of biological role, catalyzes the NADPH-dependent synthesis of dihydrouridine, a modified base found in the D-loop of most tRNAs. Specifically modifies U20 in cytoplasmic tRNAs. Activity depends on the presence of guanosine at position 19 in the tRNA substrate. Negatively regulates the activation of EIF2AK2/PKR. In Homo sapiens (Human), this protein is tRNA-dihydrouridine(20) synthase [NAD(P)+]-like (DUS2).